A 269-amino-acid chain; its full sequence is MSDLPGIVVTGASGRMGQMLMKTVLASGRARLVGAVERPGSDWVGRDAGAAMGGAAIGVTVTDDPLAAFAQAQAVIDFTAPEATVQFAELAAQARAVHVIGTTGLEPAHLERLAWAAHHAVIVRAGNMSLGVNLLTRLTQKVAEALDEDWDIEVVEAHHRMKVDAPSGTALMLGEAAARGRGVDLAQARVSGRDGITGPRAPGSIGFSAIRGGDIVGEHDVIFAAAGERITLRHVATDRAIFARGALKAALWGQDRRPGQYDMMDVLGL.

NAD(+) contacts are provided by residues 11-16 (GASGRM) and Glu-37. Arg-38 contacts NADP(+). NAD(+)-binding positions include 101–103 (GTT) and 125–128 (AGNM). His-158 serves as the catalytic Proton donor/acceptor. A (S)-2,3,4,5-tetrahydrodipicolinate-binding site is contributed by His-159. Lys-162 functions as the Proton donor in the catalytic mechanism. Position 168 to 169 (168 to 169 (GT)) interacts with (S)-2,3,4,5-tetrahydrodipicolinate.

This sequence belongs to the DapB family.

The protein localises to the cytoplasm. It carries out the reaction (S)-2,3,4,5-tetrahydrodipicolinate + NAD(+) + H2O = (2S,4S)-4-hydroxy-2,3,4,5-tetrahydrodipicolinate + NADH + H(+). The catalysed reaction is (S)-2,3,4,5-tetrahydrodipicolinate + NADP(+) + H2O = (2S,4S)-4-hydroxy-2,3,4,5-tetrahydrodipicolinate + NADPH + H(+). It participates in amino-acid biosynthesis; L-lysine biosynthesis via DAP pathway; (S)-tetrahydrodipicolinate from L-aspartate: step 4/4. Catalyzes the conversion of 4-hydroxy-tetrahydrodipicolinate (HTPA) to tetrahydrodipicolinate. The protein is 4-hydroxy-tetrahydrodipicolinate reductase of Cereibacter sphaeroides (strain KD131 / KCTC 12085) (Rhodobacter sphaeroides).